The chain runs to 159 residues: MKLNELSPSVPKKNRKRIGRGNSSGWGKTAGKGSNGQNSRAGGGVKPYFEGGQMPIYRRVPKRGFSNAIFKKEYTVISLAFLNENFEDGEEVSLETLFNKCLIKKGRDGVKVLGNGELNKKLTVKVHKISKSAKAAVEAKGGTVELVEVKGFERAETNK.

The interval M1–K46 is disordered. Positions N22 to S34 are enriched in gly residues.

It belongs to the universal ribosomal protein uL15 family. In terms of assembly, part of the 50S ribosomal subunit.

Functionally, binds to the 23S rRNA. The polypeptide is Large ribosomal subunit protein uL15 (Fusobacterium nucleatum subsp. nucleatum (strain ATCC 25586 / DSM 15643 / BCRC 10681 / CIP 101130 / JCM 8532 / KCTC 2640 / LMG 13131 / VPI 4355)).